A 314-amino-acid polypeptide reads, in one-letter code: Olfactory receptor 5P6 (314 aa).

At 1–28 (MAFQEDGNHTAVTEFVLFGLTDDPVLRV) the chain is on the extracellular side. The N-linked (GlcNAc...) asparagine glycan is linked to Asn-8. Residues 29–49 (ILFIIFLCIYLVTVSGNLSTI) form a helical membrane-spanning segment. The Cytoplasmic segment spans residues 50 to 57 (LLIRVSSQ). Residues 58–78 (LHHPMYFFLSHLAFADIGYSS) form a helical membrane-spanning segment. The Extracellular portion of the chain corresponds to 79 to 102 (SVTPNMLVNFLVERHTISYIGCAI). The cysteines at positions 100 and 192 are disulfide-linked. A helical membrane pass occupies residues 103-123 (QLGSVVFFGSSECFILAAMAY). Topologically, residues 124–136 (DRFMAICNPLLYS) are cytoplasmic. Residues 137-157 (TKMSTQVCVQLLLIAYIGGFL) form a helical membrane-spanning segment. The Extracellular segment spans residues 158 to 199 (NTWSFTICFYSLVFCGPNGVNHFFCDFAPLIELSCSDVSVPA). Residues 200–220 (TVPSFTAGSIIVVTVIVIAIS) form a helical membrane-spanning segment. Residues 221-240 (YIYILITILKMHSTEGRQKA) lie on the Cytoplasmic side of the membrane. The helical transmembrane segment at 241 to 261 (FSTCTSHLTAVTLFYGTITFI) threads the bilayer. The Extracellular segment spans residues 262-274 (YVMPKSSFSTDQN). Residues 275-295 (KVVSVFYMVVIPMLNPLIYSL) form a helical membrane-spanning segment. At 296-314 (RNNEIKGALKRQIGRKIFS) the chain is on the cytoplasmic side.

It belongs to the G-protein coupled receptor 1 family.

It is found in the cell membrane. Its function is as follows. Potential odorant receptor. This is Olfactory receptor 5P6 from Mus musculus (Mouse).